The following is a 523-amino-acid chain: Flavonoid 3',5'-hydroxylase (523 aa).

Heme is bound at residue cysteine 460.

Belongs to the cytochrome P450 family. Heme serves as cofactor.

It carries out the reaction a 3',5'-unsubstituted flavanone + 2 reduced [NADPH--hemoprotein reductase] + 2 O2 = a 3',5'-dihydroxyflavanone + 2 oxidized [NADPH--hemoprotein reductase] + 2 H2O + 2 H(+). It functions in the pathway pigment biosynthesis; anthocyanin biosynthesis. Functionally, catalyzes the 3'5'-hydroxylation of naringenin and eriodictyol to form 5,7,3,'4',5'-pentahydroxyflavanone and 3',5'-hydroxylation of dihydrokaempferol and dihydroquercetin to form dihydromyricetin. This Campanula medium (Canterbury bells) protein is Flavonoid 3',5'-hydroxylase (CYP75A6).